Here is a 551-residue protein sequence, read N- to C-terminus: Methionine--tRNA ligase (551 aa).

The short motif at 12–22 (PYANGPLHFGH) is the 'HIGH' region element. Cysteine 144, cysteine 147, cysteine 157, and cysteine 160 together coordinate Zn(2+). Positions 330–334 (QFSKS) match the 'KMSKS' region motif. Lysine 333 contacts ATP.

It belongs to the class-I aminoacyl-tRNA synthetase family. MetG type 1 subfamily. As to quaternary structure, monomer. Requires Zn(2+) as cofactor.

The protein resides in the cytoplasm. The catalysed reaction is tRNA(Met) + L-methionine + ATP = L-methionyl-tRNA(Met) + AMP + diphosphate. Functionally, is required not only for elongation of protein synthesis but also for the initiation of all mRNA translation through initiator tRNA(fMet) aminoacylation. In Chlamydia pneumoniae (Chlamydophila pneumoniae), this protein is Methionine--tRNA ligase (metG).